Here is a 476-residue protein sequence, read N- to C-terminus: Stromelysin-2 (476 aa).

Positions 1-17 are cleaved as a signal peptide; that stretch reads MEPLAILALLSLPICSA. Residues 18-99 constitute a propeptide, activation peptide; that stretch reads YPLHGAVTQG…PRCGVPDVGG (82 aa). The Cysteine switch signature appears at 90–97; sequence PRCGVPDV. Zn(2+)-binding residues include Cys92, His168, Asp170, His183, His196, and His218. Residue Glu219 is part of the active site. Residues His222 and His228 each coordinate Zn(2+). 4 Hemopexin repeats span residues 286–335, 336–382, 384–432, and 433–476; these read PDKC…WPTL, PSDL…GFPP, VKKI…FPGI, and EPQV…WLLC. Residues Cys289 and Cys476 are joined by a disulfide bond.

This sequence belongs to the peptidase M10A family. Zn(2+) serves as cofactor. Ca(2+) is required as a cofactor. As to expression, expressed in small intestine. Weak levels in heart and lung.

The protein localises to the secreted. The protein resides in the extracellular space. Its subcellular location is the extracellular matrix. The catalysed reaction is Similar to stromelysin 1, but action on collagen types III, IV and V is weak.. Its function is as follows. Can degrade fibronectin, gelatins of type I, III, IV, and V; weakly collagens III, IV, and V. Activates procollagenase. The polypeptide is Stromelysin-2 (Mmp10) (Mus musculus (Mouse)).